The sequence spans 37 residues: Large ribosomal subunit protein bL36 (37 aa).

The protein belongs to the bacterial ribosomal protein bL36 family.

This chain is Large ribosomal subunit protein bL36, found in Aliarcobacter butzleri (strain RM4018) (Arcobacter butzleri).